Reading from the N-terminus, the 327-residue chain is Golgi to ER traffic protein 4 homolog (327 aa).

N-acetylalanine is present on A2. Phosphoserine is present on S12. Positions 195–271 are interacts with BAG6; sequence FVAQAVLQFL…YQPSLRRDPM (77 aa). Residues 307-327 are disordered; that stretch reads GSSEQEDGEESPSDGSPIELD.

It belongs to the GET4 family. Component of the BAG6/BAT3 complex, at least composed of BAG6, UBL4A and GET4/TRC35. Interacts with BAG6; the interaction is direct and localizes BAG6 to the cytosol. Interacts with GET3. In terms of processing, ubiquitinated by RNF12, leading to proteasomal degradation. When unassembled from BAG6; ubiquitinylation is modulated by BAG6 quality control role and effectuated by RNF126.

The protein localises to the cytoplasm. It is found in the cytosol. Functionally, as part of a cytosolic protein quality control complex, the BAG6/BAT3 complex, maintains misfolded and hydrophobic patches-containing proteins in a soluble state and participates in their proper delivery to the endoplasmic reticulum or alternatively can promote their sorting to the proteasome where they undergo degradation. The BAG6/BAT3 complex is involved in the post-translational delivery of tail-anchored/type II transmembrane proteins to the endoplasmic reticulum membrane. Recruited to ribosomes, it interacts with the transmembrane region of newly synthesized tail-anchored proteins and together with SGTA and ASNA1 mediates their delivery to the endoplasmic reticulum. Client proteins that cannot be properly delivered to the endoplasmic reticulum are ubiquitinated and sorted to the proteasome. Similarly, the BAG6/BAT3 complex also functions as a sorting platform for proteins of the secretory pathway that are mislocalized to the cytosol either delivering them to the proteasome for degradation or to the endoplasmic reticulum. The BAG6/BAT3 complex also plays a role in the endoplasmic reticulum-associated degradation (ERAD), a quality control mechanism that eliminates unwanted proteins of the endoplasmic reticulum through their retrotranslocation to the cytosol and their targeting to the proteasome. It maintains these retrotranslocated proteins in an unfolded yet soluble state condition in the cytosol to ensure their proper delivery to the proteasome. The polypeptide is Golgi to ER traffic protein 4 homolog (Homo sapiens (Human)).